A 78-amino-acid polypeptide reads, in one-letter code: Small ribosomal subunit protein bS16c (78 aa).

Belongs to the bacterial ribosomal protein bS16 family.

The protein resides in the plastid. The protein localises to the chloroplast. The polypeptide is Small ribosomal subunit protein bS16c (Gracilaria tenuistipitata var. liui (Red alga)).